A 437-amino-acid polypeptide reads, in one-letter code: Methylenetetrahydrofolate--tRNA-(uracil-5-)-methyltransferase TrmFO (437 aa).

10–15 is a binding site for FAD; that stretch reads GAGLAG.

Belongs to the MnmG family. TrmFO subfamily. It depends on FAD as a cofactor.

The protein localises to the cytoplasm. The catalysed reaction is uridine(54) in tRNA + (6R)-5,10-methylene-5,6,7,8-tetrahydrofolate + NADH + H(+) = 5-methyluridine(54) in tRNA + (6S)-5,6,7,8-tetrahydrofolate + NAD(+). It carries out the reaction uridine(54) in tRNA + (6R)-5,10-methylene-5,6,7,8-tetrahydrofolate + NADPH + H(+) = 5-methyluridine(54) in tRNA + (6S)-5,6,7,8-tetrahydrofolate + NADP(+). In terms of biological role, catalyzes the folate-dependent formation of 5-methyl-uridine at position 54 (M-5-U54) in all tRNAs. The protein is Methylenetetrahydrofolate--tRNA-(uracil-5-)-methyltransferase TrmFO of Pelotomaculum thermopropionicum (strain DSM 13744 / JCM 10971 / SI).